We begin with the raw amino-acid sequence, 111 residues long: Phosphoribosyl-AMP cyclohydrolase (111 aa).

Aspartate 80 serves as a coordination point for Mg(2+). Position 81 (cysteine 81) interacts with Zn(2+). Mg(2+)-binding residues include aspartate 82 and aspartate 84. Cysteine 97 and cysteine 104 together coordinate Zn(2+).

It belongs to the PRA-CH family. In terms of assembly, homodimer. It depends on Mg(2+) as a cofactor. The cofactor is Zn(2+).

It is found in the cytoplasm. The enzyme catalyses 1-(5-phospho-beta-D-ribosyl)-5'-AMP + H2O = 1-(5-phospho-beta-D-ribosyl)-5-[(5-phospho-beta-D-ribosylamino)methylideneamino]imidazole-4-carboxamide. It functions in the pathway amino-acid biosynthesis; L-histidine biosynthesis; L-histidine from 5-phospho-alpha-D-ribose 1-diphosphate: step 3/9. Functionally, catalyzes the hydrolysis of the adenine ring of phosphoribosyl-AMP. The polypeptide is Phosphoribosyl-AMP cyclohydrolase (Mycobacterium ulcerans (strain Agy99)).